The sequence spans 98 residues: Aspartyl/glutamyl-tRNA(Asn/Gln) amidotransferase subunit C (98 aa).

This sequence belongs to the GatC family. In terms of assembly, heterotrimer of A, B and C subunits.

It carries out the reaction L-glutamyl-tRNA(Gln) + L-glutamine + ATP + H2O = L-glutaminyl-tRNA(Gln) + L-glutamate + ADP + phosphate + H(+). It catalyses the reaction L-aspartyl-tRNA(Asn) + L-glutamine + ATP + H2O = L-asparaginyl-tRNA(Asn) + L-glutamate + ADP + phosphate + 2 H(+). In terms of biological role, allows the formation of correctly charged Asn-tRNA(Asn) or Gln-tRNA(Gln) through the transamidation of misacylated Asp-tRNA(Asn) or Glu-tRNA(Gln) in organisms which lack either or both of asparaginyl-tRNA or glutaminyl-tRNA synthetases. The reaction takes place in the presence of glutamine and ATP through an activated phospho-Asp-tRNA(Asn) or phospho-Glu-tRNA(Gln). The sequence is that of Aspartyl/glutamyl-tRNA(Asn/Gln) amidotransferase subunit C from Microcystis aeruginosa (strain NIES-843 / IAM M-2473).